An 877-amino-acid polypeptide reads, in one-letter code: Translation initiation factor IF-2 (877 aa).

A compositionally biased stretch (basic and acidic residues) spans 66–115 (PKKESTAKKTTKKDEVKKEEKKTTTKKESKNPAKAVSEKKDEVKKEEKQP). Disordered stretches follow at residues 66–127 (PKKE…LEEK), 187–208 (SDESLKRKKKEKKNHPVASKKE), and 241–290 (ENKP…KESE). Basic residues predominate over residues 192–201 (KRKKKEKKNH). Polar residues predominate over residues 245–265 (AQPTNKKQPNILKQSLNNSIN). The tr-type G domain maps to 376–543 (QRAPVITIMG…IVLLQADILE (168 aa)). The tract at residues 385-392 (GHVDHGKT) is G1. Residue 385–392 (GHVDHGKT) coordinates GTP. The G2 stretch occupies residues 410 to 414 (GITQH). Positions 431 to 434 (DTPG) are G3. GTP-binding positions include 431-435 (DTPGH) and 485-488 (NKMD). Positions 485–488 (NKMD) are G4. The segment at 521-523 (SAK) is G5.

It belongs to the TRAFAC class translation factor GTPase superfamily. Classic translation factor GTPase family. IF-2 subfamily.

The protein localises to the cytoplasm. Its function is as follows. One of the essential components for the initiation of protein synthesis. Protects formylmethionyl-tRNA from spontaneous hydrolysis and promotes its binding to the 30S ribosomal subunits. Also involved in the hydrolysis of GTP during the formation of the 70S ribosomal complex. This is Translation initiation factor IF-2 from Campylobacter lari (strain RM2100 / D67 / ATCC BAA-1060).